A 257-amino-acid chain; its full sequence is Imidazole glycerol phosphate synthase subunit HisF (257 aa).

Residues D12 and D131 contribute to the active site.

The protein belongs to the HisA/HisF family. In terms of assembly, heterodimer of HisH and HisF.

The protein localises to the cytoplasm. The catalysed reaction is 5-[(5-phospho-1-deoxy-D-ribulos-1-ylimino)methylamino]-1-(5-phospho-beta-D-ribosyl)imidazole-4-carboxamide + L-glutamine = D-erythro-1-(imidazol-4-yl)glycerol 3-phosphate + 5-amino-1-(5-phospho-beta-D-ribosyl)imidazole-4-carboxamide + L-glutamate + H(+). Its pathway is amino-acid biosynthesis; L-histidine biosynthesis; L-histidine from 5-phospho-alpha-D-ribose 1-diphosphate: step 5/9. Functionally, IGPS catalyzes the conversion of PRFAR and glutamine to IGP, AICAR and glutamate. The HisF subunit catalyzes the cyclization activity that produces IGP and AICAR from PRFAR using the ammonia provided by the HisH subunit. The sequence is that of Imidazole glycerol phosphate synthase subunit HisF from Rhodococcus erythropolis (strain PR4 / NBRC 100887).